Reading from the N-terminus, the 270-residue chain is tRNA pseudouridine synthase A (270 aa).

Aspartate 60 serves as the catalytic Nucleophile. The interval 107–111 is RNA binding; it reads FHARF. Tyrosine 118 is a binding site for substrate. Residues 168–172 are interaction with tRNA; the sequence is QCQSR.

This sequence belongs to the tRNA pseudouridine synthase TruA family. As to quaternary structure, homodimer.

It carries out the reaction uridine(38/39/40) in tRNA = pseudouridine(38/39/40) in tRNA. Formation of pseudouridine at positions 38, 39 and 40 in the anticodon stem and loop of transfer RNAs. This chain is tRNA pseudouridine synthase A, found in Citrobacter koseri (strain ATCC BAA-895 / CDC 4225-83 / SGSC4696).